A 178-amino-acid polypeptide reads, in one-letter code: uncharacterized protein (178 aa).

Its subcellular location is the mitochondrion. This is an uncharacterized protein from Paramecium tetraurelia.